A 331-amino-acid polypeptide reads, in one-letter code: L-lactate dehydrogenase A chain (331 aa).

NAD(+) contacts are provided by residues 29–57 and arginine 98; that span reads GMVG…MEDK. Substrate contacts are provided by arginine 105, asparagine 137, and arginine 168. Position 137 (asparagine 137) interacts with NAD(+). Histidine 192 (proton acceptor) is an active-site residue. Position 247 (threonine 247) interacts with substrate.

Belongs to the LDH/MDH superfamily. LDH family. Homotetramer.

It is found in the cytoplasm. It catalyses the reaction (S)-lactate + NAD(+) = pyruvate + NADH + H(+). It functions in the pathway fermentation; pyruvate fermentation to lactate; (S)-lactate from pyruvate: step 1/1. Its function is as follows. Interconverts simultaneously and stereospecifically pyruvate and lactate with concomitant interconversion of NADH and NAD(+). The protein is L-lactate dehydrogenase A chain (ldha) of Dissostichus eleginoides (Patagonian toothfish).